Here is a 95-residue protein sequence, read N- to C-terminus: Aspartyl/glutamyl-tRNA(Asn/Gln) amidotransferase subunit C (95 aa).

Belongs to the GatC family. As to quaternary structure, heterotrimer of A, B and C subunits.

The enzyme catalyses L-glutamyl-tRNA(Gln) + L-glutamine + ATP + H2O = L-glutaminyl-tRNA(Gln) + L-glutamate + ADP + phosphate + H(+). The catalysed reaction is L-aspartyl-tRNA(Asn) + L-glutamine + ATP + H2O = L-asparaginyl-tRNA(Asn) + L-glutamate + ADP + phosphate + 2 H(+). In terms of biological role, allows the formation of correctly charged Asn-tRNA(Asn) or Gln-tRNA(Gln) through the transamidation of misacylated Asp-tRNA(Asn) or Glu-tRNA(Gln) in organisms which lack either or both of asparaginyl-tRNA or glutaminyl-tRNA synthetases. The reaction takes place in the presence of glutamine and ATP through an activated phospho-Asp-tRNA(Asn) or phospho-Glu-tRNA(Gln). The polypeptide is Aspartyl/glutamyl-tRNA(Asn/Gln) amidotransferase subunit C (Chlorobium luteolum (strain DSM 273 / BCRC 81028 / 2530) (Pelodictyon luteolum)).